We begin with the raw amino-acid sequence, 1357 residues long: DNA-directed RNA polymerase subunit beta (1357 aa).

The protein belongs to the RNA polymerase beta chain family. As to quaternary structure, the RNAP catalytic core consists of 2 alpha, 1 beta, 1 beta' and 1 omega subunit. When a sigma factor is associated with the core the holoenzyme is formed, which can initiate transcription.

It carries out the reaction RNA(n) + a ribonucleoside 5'-triphosphate = RNA(n+1) + diphosphate. In terms of biological role, DNA-dependent RNA polymerase catalyzes the transcription of DNA into RNA using the four ribonucleoside triphosphates as substrates. In Pseudomonas putida (strain GB-1), this protein is DNA-directed RNA polymerase subunit beta.